A 420-amino-acid polypeptide reads, in one-letter code: MPNRRASRNAYYFFVQEKIPELRRRGLPVARVADAIPYCSADWALLKEEEKEKYAEMAREWRAAQGKDSGPSEKQKPVCTPLRKPGMLVPKQNVSPPDLSGLSLKSDQALLGGIFYFLNIFSHGELPPHCEQRFLPCEIGCVKYSLQEGIMADFHSFINPGDSSHKIPISHFESGHDQATVIENLYRFIHPNPGNWPPIYCKSDDRARVNWCLKHMAKSSEIRQDLELLTVEDLVVGIYQQKFLKEPSKTWVRSLLEVAMWDYSSNTRCKWHEENDILFCALAVCKKIANCISNSLATLFGIQLTEAHVPLQDYEASNSVTPKMVVLDAGRYQKLRVESPGFSHFSSSNQEQRSNTPTGDYPSGVKISGQNSSVRGRGITRLLESISSSSSNIHKFSNCETPVSPYTSPKHGYKSFSSLS.

The segment at residues 4 to 73 (RRASRNAYYF…AQGKDSGPSE (70 aa)) is a DNA-binding region (HMG box). Disordered stretches follow at residues 62–94 (RAAQ…KQNV), 341–372 (GFSH…GQNS), and 392–420 (NIHK…SSLS). 2 stretches are compositionally biased toward polar residues: residues 344 to 358 (HFSS…NTPT) and 392 to 407 (NIHK…SPYT).

The protein belongs to the maelstrom family. As to quaternary structure, interacts with SMARCB1, SIN3B and DDX4. Interacts with piRNA-associated proteins TDRD1, PIWIL1 and PIWIL2. Interacts with TEX19.

It is found in the cytoplasm. It localises to the nucleus. Functionally, plays a central role during spermatogenesis by repressing transposable elements and preventing their mobilization, which is essential for the germline integrity. Acts via the piRNA metabolic process, which mediates the repression of transposable elements during meiosis by forming complexes composed of piRNAs and Piwi proteins and governs the methylation and subsequent repression of transposons. Its association with piP-bodies suggests a participation in the secondary piRNAs metabolic process. Required for the localization of germ-cell factors to the meiotic nuage. This Bos taurus (Bovine) protein is Protein maelstrom homolog (MAEL).